Consider the following 265-residue polypeptide: Apolipoprotein A-I (265 aa).

The N-terminal stretch at 1–18 is a signal peptide; sequence MKAVLLTLAVLFLTGSQA. 2 tandem repeats follow at residues 67–88 and 89–110. The tract at residues 67-265 is 10 X approximate tandem repeats; it reads LKLLDNWDSL…DEASKKLNAQ (199 aa). At Met-109 the chain carries Methionine sulfoxide. The stretch at 111–121 is one 3; half-length repeat; the sequence is KDLEEVKQKVQ. 5 tandem repeats follow at residues 122-142, 144-165, 166-187, 188-209, and 210-230. Residues 231-241 form a 9; half-length repeat; that stretch reads PALEDLRQGLV. Copy 10 of the repeat occupies 242–265; it reads PVLESLKVSILAAIDEASKKLNAQ.

Belongs to the apolipoprotein A1/A4/E family. In terms of assembly, homodimer. Interacts with APOA1BP and CLU. Component of a sperm activating protein complex (SPAP), consisting of APOA1, an immunoglobulin heavy chain, an immunoglobulin light chain and albumin. Interacts with NDRG1. Interacts with SCGB3A2. Interacts with NAXE and YJEFN3. Glycosylated. Post-translationally, palmitoylated. In terms of processing, phosphorylation sites are present in the extracellular medium. As to expression, major protein of plasma HDL, also found in chylomicrons.

The protein localises to the secreted. In terms of biological role, participates in the reverse transport of cholesterol from tissues to the liver for excretion by promoting cholesterol efflux from tissues and by acting as a cofactor for the lecithin cholesterol acyltransferase (LCAT). As part of the SPAP complex, activates spermatozoa motility. This Tursiops truncatus (Atlantic bottle-nosed dolphin) protein is Apolipoprotein A-I (APOA1).